The sequence spans 355 residues: Putative beta-lactamase HcpE (355 aa).

A signal peptide spans 1 to 22 (MNIKILKILVGGLFFLSLNAHL). TPR repeat units lie at residues 27 to 60 (DNSF…GVSE), 63 to 96 (TQLG…DDRE), 98 to 131 (CFGL…LKHP), 132 to 166 (ESCY…DMAK), 202 to 240 (GQAC…NNSG), 245 to 275 (LGSM…MGSA), 276 to 311 (VSCS…MGDE), and 312 to 344 (VGCF…GMKQ). 9 cysteine pairs are disulfide-bonded: Cys-54/Cys-62, Cys-90/Cys-98, Cys-126/Cys-134, Cys-160/Cys-168, Cys-197/Cys-205, Cys-234/Cys-242, Cys-270/Cys-278, Cys-306/Cys-314, and Cys-338/Cys-346.

It belongs to the hcp beta-lactamase family.

The protein localises to the secreted. It catalyses the reaction a beta-lactam + H2O = a substituted beta-amino acid. Functionally, may hydrolyze 6-aminopenicillinic acid and 7-aminocephalosporanic acid (ACA) derivatives. In Helicobacter pylori (strain J99 / ATCC 700824) (Campylobacter pylori J99), this protein is Putative beta-lactamase HcpE (hcpE).